The following is a 396-amino-acid chain: NADH-quinone oxidoreductase subunit D 1 (396 aa).

This sequence belongs to the complex I 49 kDa subunit family. In terms of assembly, NDH-1 is composed of 14 different subunits. Subunits NuoB, C, D, E, F, and G constitute the peripheral sector of the complex.

Its subcellular location is the cell inner membrane. It catalyses the reaction a quinone + NADH + 5 H(+)(in) = a quinol + NAD(+) + 4 H(+)(out). In terms of biological role, NDH-1 shuttles electrons from NADH, via FMN and iron-sulfur (Fe-S) centers, to quinones in the respiratory chain. The immediate electron acceptor for the enzyme in this species is believed to be ubiquinone. Couples the redox reaction to proton translocation (for every two electrons transferred, four hydrogen ions are translocated across the cytoplasmic membrane), and thus conserves the redox energy in a proton gradient. The sequence is that of NADH-quinone oxidoreductase subunit D 1 from Rhizobium etli (strain CIAT 652).